The chain runs to 186 residues: Adenine phosphoribosyltransferase (186 aa).

132–136 (ATGGS) provides a ligand contact to AMP.

This sequence belongs to the purine/pyrimidine phosphoribosyltransferase family. Homodimer. Requires Mg(2+) as cofactor.

It localises to the cytoplasm. The protein resides in the nucleus. It carries out the reaction AMP + diphosphate = 5-phospho-alpha-D-ribose 1-diphosphate + adenine. The protein operates within purine metabolism; AMP biosynthesis via salvage pathway; AMP from adenine: step 1/1. In terms of biological role, catalyzes a salvage reaction resulting in the formation of AMP, that is energically less costly than de novo synthesis. The chain is Adenine phosphoribosyltransferase (APT1) from Debaryomyces hansenii (strain ATCC 36239 / CBS 767 / BCRC 21394 / JCM 1990 / NBRC 0083 / IGC 2968) (Yeast).